The primary structure comprises 1006 residues: uncharacterized protein (1006 aa).

The tract at residues 326–371 (EMEKKRPRSPELVPKKIVMEKERPSSPDSEAEEREHNLRIEKERHQ) is disordered. Basic and acidic residues-rich tracts occupy residues 338–350 (VPKK…ERPS) and 358–371 (EREH…ERHQ). Coiled-coil stretches lie at residues 358–473 (EREH…ARLA) and 756–782 (EVQK…AFGR).

This is an uncharacterized protein from Caenorhabditis elegans.